The primary structure comprises 460 residues: Sexual development regulator velC (460 aa).

Disordered regions lie at residues 67 to 131 (VGPD…PQAP), 152 to 216 (YAPR…RPDP), and 422 to 460 (KKGNDRSKNTRSHDDSSDGEQDEGEATLQGKRRRRSARQ). Residues 192-207 (PVTTNGRPPDSNSPMV) show a composition bias toward polar residues. Residues 239-422 (LSDNRFNLQI…KEQGCIISIK (184 aa)) form the Velvet domain. The segment covering 423–437 (KGNDRSKNTRSHDDS) has biased composition (basic and acidic residues). Positions 451-460 (GKRRRRSARQ) are enriched in basic residues.

The protein belongs to the velvet family. VelC subfamily. In terms of assembly, interacts with VE1.

The protein resides in the nucleus. Velvet-domain-containing protein that acts as a positive regulator of sexual development. Dispensable for regulation of conidial size, hyphal hydrophobicity, fumonisin production, and oxidant resistance. In Gibberella moniliformis (strain M3125 / FGSC 7600) (Maize ear and stalk rot fungus), this protein is Sexual development regulator velC.